We begin with the raw amino-acid sequence, 124 residues long: Ribonuclease pancreatic (124 aa).

The span at 1–13 (KETAAAKFERQHI) shows a compositional bias: basic and acidic residues. The tract at residues 1-24 (KETAAAKFERQHIDSNPSSVSSSN) is disordered. Positions 7 and 10 each coordinate substrate. The Proton acceptor role is filled by H12. Low complexity predominate over residues 15–24 (SNPSSVSSSN). 4 disulfide bridges follow: C26-C84, C40-C95, C58-C110, and C65-C72. N34 carries N-linked (GlcNAc...) asparagine; partial glycosylation. Residues 41 to 45 (KPVNT), K66, and R85 contribute to the substrate site. The active-site Proton donor is the H119.

The protein belongs to the pancreatic ribonuclease family. Monomer. Interacts with and forms tight 1:1 complexes with RNH1. Dimerization of two such complexes may occur. Interaction with RNH1 inhibits this protein. Pancreas.

The protein resides in the secreted. It catalyses the reaction an [RNA] containing cytidine + H2O = an [RNA]-3'-cytidine-3'-phosphate + a 5'-hydroxy-ribonucleotide-3'-[RNA].. The enzyme catalyses an [RNA] containing uridine + H2O = an [RNA]-3'-uridine-3'-phosphate + a 5'-hydroxy-ribonucleotide-3'-[RNA].. Endonuclease that catalyzes the cleavage of RNA on the 3' side of pyrimidine nucleotides. Acts on single-stranded and double-stranded RNA. In Antilocapra americana (Pronghorn), this protein is Ribonuclease pancreatic (RNASE1).